A 359-amino-acid chain; its full sequence is Type-1 angiotensin II receptor (359 aa).

The Extracellular segment spans residues 1–25 (MILNSSTEDGIKRIQDDCPKAGRHN). Asn4 carries an N-linked (GlcNAc...) (complex) asparagine glycan. Angiotensin II contacts are provided by Gln15 and Asp17. Cystine bridges form between Cys18–Cys274 and Cys101–Cys180. Residues 26-55 (YIFVMIPTLYSIIFVVGIFGNSLVVIVIYF) form a helical membrane-spanning segment. The Cytoplasmic segment spans residues 56–61 (YMKLKT). The chain crosses the membrane as a helical span at residues 62–89 (VASVFLLNLALADLCFLLTLPLWAVYTA). The Extracellular segment spans residues 90 to 98 (MEYRWPFGN). A helical transmembrane segment spans residues 99–125 (YLCKIASASVSFNLYASVFLLTCLSID). At 126–141 (RYLAIVHPMKSRLRRT) the chain is on the cytoplasmic side. Residues 142 to 165 (MLVAKVTCIIIWLLAGLASLPAII) traverse the membrane as a helical segment. Residues 166–190 (HRNVFFIENTNITVCAFHYESQNST) are Extracellular-facing. Arg167 provides a ligand contact to angiotensin II. A glycan (N-linked (GlcNAc...) asparagine) is linked at Asn176. Angiotensin II-binding residues include Phe182, His183, and Tyr184. A glycan (N-linked (GlcNAc...) asparagine) is linked at Asn188. The helical transmembrane segment at 191-216 (LPIGLGLTKNILGFLFPFLIILTSYT) threads the bilayer. Lys199 contributes to the angiotensin II binding site. Residues 217–239 (LIWKALKKAYEIQKNKPRNDDIF) lie on the Cytoplasmic side of the membrane. The chain crosses the membrane as a helical span at residues 240–268 (KIIMAIVLFFFFSWIPHQIFTFLDVLIQL). The Extracellular segment spans residues 269–278 (GIIRDCRIAD). Residues 279-304 (IVDTAMPITICIAYFNNCLNPLFYGF) form a helical membrane-spanning segment. Residues 305–359 (LGKKFKRYFLQLLKYIPPKAKSHSNLSTKMSTLSYRPSDNVSSSTKKPAPCFEVE) are Cytoplasmic-facing. Positions 335–350 (STLSYRPSDNVSSSTK) are enriched in polar residues. A disordered region spans residues 335-359 (STLSYRPSDNVSSSTKKPAPCFEVE). Residue Cys355 is the site of S-palmitoyl cysteine attachment.

It belongs to the G-protein coupled receptor 1 family. Interacts with MAS1. Interacts with ARRB1. Interacts with FLNA (via filamin repeat 21); increases PKA-mediated phosphorylation of FLNA. C-terminal Ser or Thr residues may be phosphorylated. As to expression, liver, lung, adrenal and adrenocortical adenomas.

It localises to the cell membrane. Strongly inhibited by anti-hypertensive drugs losartan, candesartan, valsartan, irbesartan, telmisartan, eprosartan, olmesartan and azilsartan, most of which share a common biphenyl-tetrazole scaffold. Functionally, receptor for angiotensin II, a vasoconstricting peptide, which acts as a key regulator of blood pressure and sodium retention by the kidney. The activated receptor in turn couples to G-alpha proteins G(q) (GNAQ, GNA11, GNA14 or GNA15) and thus activates phospholipase C and increases the cytosolic Ca(2+) concentrations, which in turn triggers cellular responses such as stimulation of protein kinase C. Its function is as follows. (Microbial infection) During SARS coronavirus-2/SARS-CoV-2 infection, it is able to recognize and internalize the complex formed by secreted ACE2 and SARS-CoV-2 spike protein through DNM2/dynamin 2-dependent endocytosis. The sequence is that of Type-1 angiotensin II receptor from Homo sapiens (Human).